We begin with the raw amino-acid sequence, 163 residues long: Large ribosomal subunit protein uL15 (163 aa).

This sequence belongs to the universal ribosomal protein uL15 family. Part of the 50S ribosomal subunit.

Its function is as follows. Binds to the 23S rRNA. This is Large ribosomal subunit protein uL15 from Orientia tsutsugamushi (strain Ikeda) (Rickettsia tsutsugamushi).